A 447-amino-acid chain; its full sequence is Tryptophan synthase beta chain (447 aa).

An N6-(pyridoxal phosphate)lysine modification is found at lysine 92. A disordered region spans residues 408–447; the sequence is GLAVKGGEQPKEFSDGPPLGKLAPSGGSAVREATSVGARK.

This sequence belongs to the TrpB family. As to quaternary structure, tetramer of two alpha and two beta chains. It depends on pyridoxal 5'-phosphate as a cofactor.

It catalyses the reaction (1S,2R)-1-C-(indol-3-yl)glycerol 3-phosphate + L-serine = D-glyceraldehyde 3-phosphate + L-tryptophan + H2O. The protein operates within amino-acid biosynthesis; L-tryptophan biosynthesis; L-tryptophan from chorismate: step 5/5. Its function is as follows. The beta subunit is responsible for the synthesis of L-tryptophan from indole and L-serine. The sequence is that of Tryptophan synthase beta chain from Polaromonas sp. (strain JS666 / ATCC BAA-500).